Consider the following 475-residue polypeptide: MPPKRKSSPKGKTPTVVDGLSTEEMSKEQLEEHIMRLREELDREREERNYFQLERDKIHTFWEITRRHLEENKCELRNRERELEEVEERHQVEIKVYKQKVKHLLYEQQNMLSELKAESIISTKLLQDEHADLEKEQWKDMRSLKLELKQQELSSENVLKRIHLKHDEETTDLRNDFARQVQEIGSKYEKRMQKLRQEEELRRKTEIHEIEERKNTHINMLMKNHEKAFRDIRNYFSDIVYKNLDLITSLKEELKEMKKNEEKRNKEMAEVLEQNKELKESSQKAKEQVAELQKQLANYEKDKSILTRSRARLKMSDREMKELKWELEVLEQRFSKVQLERDELYMKFTKAILEVQQKSGFKNLLLECKLNTLNDTLEKKEAQLSEVLSASNLDPTTLSVVTHKLEEVLESKNHTIKDLQYEVARVCKAHNDLLKTSEAKLRAFGIPVEELCFEPLKSNGQSVGQGPAMFVSSSN.

The segment at 1–22 is disordered; the sequence is MPPKRKSSPKGKTPTVVDGLST. The tract at residues 1–113 is regulates microtubule-binding; that stretch reads MPPKRKSSPK…LLYEQQNMLS (113 aa). Coiled-coil stretches lie at residues 20–104, 142–200, and 242–426; these read LSTE…VKHL, RSLK…QEEE, and KNLD…VARV. The segment at 114 to 257 is microtubule-binding; it reads ELKAESIIST…TSLKEELKEM (144 aa).

The protein belongs to the DRC4 family. As to quaternary structure, component of the nexin-dynein regulatory complex (N-DRC). Interacts with microtubules.

It is found in the cytoplasm. It localises to the cytoskeleton. Its subcellular location is the cell projection. The protein localises to the cilium. The protein resides in the flagellum. It is found in the cilium axoneme. It localises to the cilium basal body. Its subcellular location is the golgi apparatus. The protein localises to the flagellum axoneme. Functionally, component of the nexin-dynein regulatory complex (N-DRC), a key regulator of ciliary/flagellar motility which maintains the alignment and integrity of the distal axoneme and regulates microtubule sliding in motile axonemes. Plays an important role in the assembly of the N-DRC linker. Plays dual roles at both the primary (or non-motile) cilia to regulate hedgehog signaling and in motile cilia to coordinate cilia movement. Required for proper slow muscle development and positively regulates ciliary smoothened (SMO)-dependent Hedgehog (Hh) signaling pathway. Required for tether cilia motility which is essential for normal otolith formation and localization in the developing inner ear. The polypeptide is Dynein regulatory complex subunit 4 (gas8) (Danio rerio (Zebrafish)).